A 236-amino-acid chain; its full sequence is Large ribosomal subunit protein uL3 (236 aa).

The span at 139–149 (SVSHRSHGSTG) shows a compositional bias: low complexity. Residues 139 to 165 (SVSHRSHGSTGQRQDPGKVFKGKKMAG) are disordered. Position 152 is an N5-methylglutamine (Q152).

Belongs to the universal ribosomal protein uL3 family. Part of the 50S ribosomal subunit. Forms a cluster with proteins L14 and L19. Post-translationally, methylated by PrmB.

In terms of biological role, one of the primary rRNA binding proteins, it binds directly near the 3'-end of the 23S rRNA, where it nucleates assembly of the 50S subunit. The sequence is that of Large ribosomal subunit protein uL3 from Pelagibacter ubique (strain HTCC1062).